A 362-amino-acid chain; its full sequence is Ferredoxin--NADP reductase, leaf isozyme 1, chloroplastic (362 aa).

The N-terminal 62 residues, 1–62 (MAAVTAAAVS…DAAAVAAAPA (62 aa)), are a transit peptide targeting the chloroplast. Residues 83-205 (KEPYVGKCLL…TGPVGKEMLM (123 aa)) form the FAD-binding FR-type domain. Residues 141–144 (RLYS), 162–164 (CVK), Tyr168, 179–181 (VCS), and Thr220 each bind FAD. NADP(+)-binding residues include Ser144 and Lys164. An intrachain disulfide couples Cys180 to Cys185. Position 181 is a phosphoserine (Ser181). Residues Thr220, 252-253 (VP), 282-283 (SR), Lys292, 321-322 (GL), and Glu360 each bind NADP(+).

This sequence belongs to the ferredoxin--NADP reductase type 1 family. As to quaternary structure, component of high molecular weight thylakoid LFNRs-containing protein complexes containing LIR1, LFNR1, LFNR2, TIC62 and TROL proteins. Interacts directly with LIR1 and TIC62; LIR1 increases the affinity of LFNR1 and LFNR2 for TIC62. FAD serves as cofactor. May form interchain disulfide bonds with LIR1.

It is found in the plastid. It localises to the chloroplast stroma. Its subcellular location is the chloroplast thylakoid membrane. It carries out the reaction 2 reduced [2Fe-2S]-[ferredoxin] + NADP(+) + H(+) = 2 oxidized [2Fe-2S]-[ferredoxin] + NADPH. It functions in the pathway energy metabolism; photosynthesis. In terms of biological role, may play a key role in regulating the relative amounts of cyclic and non-cyclic electron flow to meet the demands of the plant for ATP and reducing power. This Oryza sativa subsp. japonica (Rice) protein is Ferredoxin--NADP reductase, leaf isozyme 1, chloroplastic.